Consider the following 426-residue polypeptide: DNA polymerase processivity factor component A20 (426 aa).

It belongs to the poxviruses A20 family. Interacts with the DNA polymerase catalytic subunit E9. Interacts with UDG. Component of the Uracil-DNA glycosylase(UDG)-A20-polymerase complex; A20 and UDG form a heterodimeric processivity factor that associates with E9 to form the processive polymerase holoenzyme. Interacts with D5.

Plays an essential role in viral DNA replication by acting as the polymerase processivity factor together with protein D4. May serve as a bridge which links the DNA polymerase E9 and the uracil DNA glycosylase. The chain is DNA polymerase processivity factor component A20 from Vaccinia virus (strain Ankara) (VACV).